We begin with the raw amino-acid sequence, 721 residues long: WD repeat and coiled-coil-containing protein (721 aa).

Met1 carries the post-translational modification N-acetylmethionine. 2 WD repeats span residues 55 to 98 (GQFE…MESS) and 154 to 194 (NTQG…LHRC). Ser299, Ser468, Ser501, and Ser523 each carry phosphoserine. Positions 520–537 (QPASLPRHSSTPDHTSTL) are enriched in polar residues. Residues 520–553 (QPASLPRHSSTPDHTSTLEPPRLPQRKNLQSEKE) are disordered. At Thr530 the chain carries Phosphothreonine. The interval 539–545 (PPRLPQR) is interaction with HCK. A coiled-coil region spans residues 556–584 (QLSKEVEILSRNLVEMQRCLSELTNRLHN). Phosphoserine occurs at positions 686 and 690.

As to quaternary structure, oligomer. Interacts with HCK (via SH3 domain). Post-translationally, phosphorylated on Tyr when associated with HCK.

This is WD repeat and coiled-coil-containing protein from Homo sapiens (Human).